The following is a 275-amino-acid chain: uncharacterized protein (275 aa).

This is an uncharacterized protein from Acanthamoeba polyphaga mimivirus (APMV).